We begin with the raw amino-acid sequence, 445 residues long: Phospho-alpha-glucosidase PagL (445 aa).

4–71 (YSICIVGGGS…ELEEVIWTTD (68 aa)) is a binding site for NAD(+). Substrate is bound by residues R94 and N148. Position 171 (C171) interacts with Mn(2+). D172 functions as the Proton donor in the catalytic mechanism. H201 serves as a coordination point for Mn(2+). Catalysis depends on Y264, which acts as the Proton acceptor. Residue R284 participates in substrate binding.

It belongs to the glycosyl hydrolase 4 family. As to quaternary structure, homotetramer. NAD(+) serves as cofactor. The cofactor is Mn(2+).

In terms of biological role, phospho-alpha-glucosidase that catalyzes the hydrolysis of p-nitrophenyl-alpha-D-glucopyranoside 6-phosphate, but is not able to cleave 'natural' phospho-alpha-glucosides produced via the phosphoenolpyruvate-dependent sugar phosphotransferase system (PEP-PTS). The chain is Phospho-alpha-glucosidase PagL (pagL) from Clostridium acetobutylicum (strain ATCC 824 / DSM 792 / JCM 1419 / IAM 19013 / LMG 5710 / NBRC 13948 / NRRL B-527 / VKM B-1787 / 2291 / W).